Reading from the N-terminus, the 1456-residue chain is Macrophage mannose receptor 1 (1456 aa).

Positions 1 to 19 are cleaved as a signal peptide; the sequence is MRLLLLLAFISVIPVSVQL. Topologically, residues 20 to 1388 are extracellular; the sequence is LDARQFLIYN…DPQPKGSSKA (1369 aa). In terms of domain architecture, Ricin B-type lectin spans 22 to 142; that stretch reads ARQFLIYNED…SGLWSRWKVY (121 aa). 7 cysteine pairs are disulfide-bonded: Cys-35/Cys-49, Cys-74/Cys-91, Cys-102/Cys-149, Cys-168/Cys-194, Cys-182/Cys-209, Cys-247/Cys-340, and Cys-316/Cys-332. The N-linked (GlcNAc...) asparagine glycan is linked to Asn-104. A Fibronectin type-II domain is found at 163–211; that stretch reads ANGAVCAFPFKFENKWYADCTSAGRSDGWLWCGTTTDYDKDKLFGFCPL. One can recognise a C-type lectin 1 domain in the interval 225-341; it reads LTGILYQINS…CVQKLGYICK (117 aa). Asn-344 is a glycosylation site (N-linked (GlcNAc...) asparagine). C-type lectin domains follow at residues 369-487, 511-626, 655-778, and 807-923; these read YAGH…YICK, HGFY…FVCK, KTSM…WICQ, and YKDY…FICQ. 2 disulfide bridges follow: Cys-391-Cys-486 and Cys-463-Cys-478. N-linked (GlcNAc...) asparagine glycosylation occurs at Asn-529. Disulfide bonds link Cys-532–Cys-625, Cys-600–Cys-617, Cys-680–Cys-777, Cys-753–Cys-769, Cys-828–Cys-922, and Cys-899–Cys-914. Asn-926 and Asn-930 each carry an N-linked (GlcNAc...) asparagine glycan. C-type lectin domains follow at residues 951 to 1079, 1101 to 1212, and 1240 to 1355; these read YKNK…YICQ, YGKS…FLCK, and FYGH…FICK. Intrachain disulfides connect Cys-976–Cys-1078, Cys-1051–Cys-1070, Cys-1122–Cys-1211, Cys-1189–Cys-1203, Cys-1262–Cys-1354, and Cys-1331–Cys-1346. N-linked (GlcNAc...) asparagine glycosylation is present at Asn-1159. An N-linked (GlcNAc...) asparagine glycan is attached at Asn-1204. Residues 1389 to 1409 traverse the membrane as a helical segment; the sequence is AGVVTVVLLIVIGAGVAAYFF. Over 1410-1456 the chain is Cytoplasmic; it reads YKKRHALHIPQEATFENTLYFNSNLSPGTSDTKDLMGNIEQNEHAII.

As to expression, detected in macrophages.

The protein localises to the endosome membrane. The protein resides in the cell membrane. Mediates the endocytosis of glycoproteins by macrophages. Binds both sulfated and non-sulfated polysaccharide chains. Acts as phagocytic receptor for bacteria, fungi and other pathogens. The protein is Macrophage mannose receptor 1 (Mrc1) of Mus musculus (Mouse).